The primary structure comprises 601 residues: Replication protein A 70 kDa DNA-binding subunit (601 aa).

The disordered stretch occupies residues 107–172 (MPGKIGDPTP…NTPGGSSKVV (66 aa)). Residues 124 to 135 (APSTAPAPTARP) show a composition bias toward low complexity. Polar residues predominate over residues 137 to 153 (QPQNGSDGSTYRPSAQS). Positions 184–268 (WTIRARVTNK…LKNDYEMTLN (85 aa)) form a DNA-binding region, OB. The residue at position 370 (Ser370) is a Phosphoserine. The segment at 466–488 (CPSKDCNKKVVDQQNGMFRCEKC) adopts a C4-type zinc-finger fold.

This sequence belongs to the replication factor A protein 1 family. Component of the heterotrimeric canonical replication protein A complex (RPA).

It localises to the nucleus. The protein localises to the PML body. Its function is as follows. As part of the heterotrimeric replication protein A complex (RPA/RP-A), binds and stabilizes single-stranded DNA intermediates, that form during DNA replication or upon DNA stress. It prevents their reannealing and in parallel, recruits and activates different proteins and complexes involved in DNA metabolism. Thereby, it plays an essential role both in DNA replication and the cellular response to DNA damage. In Danio rerio (Zebrafish), this protein is Replication protein A 70 kDa DNA-binding subunit (rpa1).